Reading from the N-terminus, the 401-residue chain is Beta-ketoadipyl-CoA thiolase (401 aa).

Catalysis depends on Cys-91, which acts as the Acyl-thioester intermediate. Residues His-357 and Cys-387 each act as proton acceptor in the active site.

This sequence belongs to the thiolase-like superfamily. Thiolase family.

It carries out the reaction succinyl-CoA + acetyl-CoA = 3-oxoadipyl-CoA + CoA. It participates in aromatic compound metabolism; beta-ketoadipate pathway; acetyl-CoA and succinyl-CoA from 3-oxoadipate: step 2/2. In terms of biological role, catalyzes thiolytic cleavage of beta-ketoadipyl-CoA to succinyl-CoA and acetyl-CoA. The chain is Beta-ketoadipyl-CoA thiolase (pcaF) from Pseudomonas aeruginosa (strain ATCC 15692 / DSM 22644 / CIP 104116 / JCM 14847 / LMG 12228 / 1C / PRS 101 / PAO1).